The following is a 392-amino-acid chain: Formate-dependent phosphoribosylglycinamide formyltransferase (392 aa).

N(1)-(5-phospho-beta-D-ribosyl)glycinamide is bound by residues 22–23 and Glu-82; that span reads EL. ATP is bound by residues Arg-114, Lys-155, 160 to 165, 195 to 198, and Glu-203; these read SSGKGQ and EGVV. In terms of domain architecture, ATP-grasp spans 119 to 308; the sequence is RLAAEELGLP…EFALHVRAFL (190 aa). Glu-267 and Glu-279 together coordinate Mg(2+). N(1)-(5-phospho-beta-D-ribosyl)glycinamide-binding positions include Asp-286, Lys-355, and 362–363; that span reads RR.

Belongs to the PurK/PurT family. Homodimer.

The enzyme catalyses N(1)-(5-phospho-beta-D-ribosyl)glycinamide + formate + ATP = N(2)-formyl-N(1)-(5-phospho-beta-D-ribosyl)glycinamide + ADP + phosphate + H(+). Its pathway is purine metabolism; IMP biosynthesis via de novo pathway; N(2)-formyl-N(1)-(5-phospho-D-ribosyl)glycinamide from N(1)-(5-phospho-D-ribosyl)glycinamide (formate route): step 1/1. In terms of biological role, involved in the de novo purine biosynthesis. Catalyzes the transfer of formate to 5-phospho-ribosyl-glycinamide (GAR), producing 5-phospho-ribosyl-N-formylglycinamide (FGAR). Formate is provided by PurU via hydrolysis of 10-formyl-tetrahydrofolate. This is Formate-dependent phosphoribosylglycinamide formyltransferase from Cronobacter sakazakii (strain ATCC BAA-894) (Enterobacter sakazakii).